A 265-amino-acid polypeptide reads, in one-letter code: Undecaprenyl-diphosphatase (265 aa).

8 helical membrane passes run 1–21 (MDWL…FLPI), 40–60 (GLAF…LAFH), 87–107 (WAVI…ENVI), 113–133 (ASLV…WADV), 151–173 (IIGF…TITA), 188–208 (SFLL…VELI), 214–234 (VAWG…WLCI), and 244–264 (IGML…LVWV).

This sequence belongs to the UppP family.

The protein localises to the cell inner membrane. It catalyses the reaction di-trans,octa-cis-undecaprenyl diphosphate + H2O = di-trans,octa-cis-undecaprenyl phosphate + phosphate + H(+). Its function is as follows. Catalyzes the dephosphorylation of undecaprenyl diphosphate (UPP). Confers resistance to bacitracin. The sequence is that of Undecaprenyl-diphosphatase from Chromohalobacter salexigens (strain ATCC BAA-138 / DSM 3043 / CIP 106854 / NCIMB 13768 / 1H11).